A 928-amino-acid chain; its full sequence is RhoGEF domain-containing protein gxcH (928 aa).

Positions 30-48 (SKSFDNNNNNNSNTNNIKN) are enriched in low complexity. 3 disordered regions span residues 30–76 (SKSF…PPVP), 90–201 (ITNY…PPLG), and 318–410 (DNGV…NKDT). The span at 93 to 103 (YIPTTPPSINI) shows a compositional bias: polar residues. Acidic residues predominate over residues 112-123 (DNYDDNYDDNYS). Composition is skewed to polar residues over residues 129-141 (TSTT…SPEF), 175-187 (ETFN…EGLQ), and 334-367 (KSGT…NLRG). Residues 377–407 (NQTTNKNNSNNNNNNTTTNNNNNNNNNNNNN) show a composition bias toward low complexity. One can recognise a DH domain in the interval 484-671 (IFNKVVKEII…GKIVSDINGK (188 aa)). Positions 699–807 (FIGEGKVKKV…NKIEDQIVSE (109 aa)) are PH-like. Residues 835 to 928 (SDSQSDFVDH…NTEPENFSFY (94 aa)) are disordered. Low complexity predominate over residues 848 to 857 (QEQQEQQQQQ).

GTPase-activating protein. The chain is RhoGEF domain-containing protein gxcH (gxcH) from Dictyostelium discoideum (Social amoeba).